Reading from the N-terminus, the 317-residue chain is HTH-type transcriptional regulator MetR (317 aa).

The 59-residue stretch at 1–59 (MIEVKHLKTLQALRNCGSLAAAAATLHQTQSALSHQFSDLEQRLGFRLFVRKSQPLRFT) folds into the HTH lysR-type domain. The segment at residues 19-38 (LAAAAATLHQTQSALSHQFS) is a DNA-binding region (H-T-H motif).

This sequence belongs to the LysR transcriptional regulatory family.

The protein resides in the cytoplasm. In terms of biological role, control of the last step in methionine biosynthesis; MetR is a positive activator of the metA, metE and metH genes. It is also a negative regulator of its own expression. This chain is HTH-type transcriptional regulator MetR (metR), found in Escherichia coli O157:H7.